The primary structure comprises 321 residues: Probable arabinan endo-1,5-alpha-L-arabinosidase A (321 aa).

The signal sequence occupies residues 1 to 19; the sequence is MYRLLSVASVPLLASLVHG. D34 acts as the Proton acceptor in catalysis. E200 (proton donor) is an active-site residue. N-linked (GlcNAc...) asparagine glycosylation is present at N295.

This sequence belongs to the glycosyl hydrolase 43 family.

It localises to the secreted. The enzyme catalyses Endohydrolysis of (1-&gt;5)-alpha-arabinofuranosidic linkages in (1-&gt;5)-arabinans.. The protein operates within glycan metabolism; L-arabinan degradation. Its function is as follows. Endo-1,5-alpha-L-arabinanase involved in degradation of pectin. Its preferred substrate is linear 1,5-alpha-L-arabinan. This chain is Probable arabinan endo-1,5-alpha-L-arabinosidase A (abnA), found in Aspergillus niger (strain ATCC MYA-4892 / CBS 513.88 / FGSC A1513).